A 94-amino-acid polypeptide reads, in one-letter code: Acylphosphatase (94 aa).

Residues 5–94 (RLTAFVHGHV…PRDVEGFVER (90 aa)) enclose the Acylphosphatase-like domain. Catalysis depends on residues Arg20 and Asn38.

Belongs to the acylphosphatase family.

The catalysed reaction is an acyl phosphate + H2O = a carboxylate + phosphate + H(+). The protein is Acylphosphatase (acyP) of Corynebacterium glutamicum (strain ATCC 13032 / DSM 20300 / JCM 1318 / BCRC 11384 / CCUG 27702 / LMG 3730 / NBRC 12168 / NCIMB 10025 / NRRL B-2784 / 534).